Reading from the N-terminus, the 308-residue chain is Acetylglutamate kinase (308 aa).

Substrate is bound by residues 86–87 (GG), Arg108, and Asn201.

Belongs to the acetylglutamate kinase family. ArgB subfamily.

It is found in the cytoplasm. It carries out the reaction N-acetyl-L-glutamate + ATP = N-acetyl-L-glutamyl 5-phosphate + ADP. The protein operates within amino-acid biosynthesis; L-arginine biosynthesis; N(2)-acetyl-L-ornithine from L-glutamate: step 2/4. Its function is as follows. Catalyzes the ATP-dependent phosphorylation of N-acetyl-L-glutamate. The chain is Acetylglutamate kinase from Prochlorococcus marinus (strain MIT 9303).